Reading from the N-terminus, the 198-residue chain is Methyl-coenzyme M reductase operon protein C (198 aa).

As to quaternary structure, MCR is composed of three subunits: alpha, beta, and gamma. The function of proteins C and D is not known.

The chain is Methyl-coenzyme M reductase operon protein C (mcrC) from Methanococcus vannielii.